The primary structure comprises 214 residues: UPF0758 protein (214 aa).

The MPN domain occupies 92 to 214 (VLSSWQALLD…ELSFRAEGLL (123 aa)). Residues H163, H165, and D176 each coordinate Zn(2+). The JAMM motif signature appears at 163–176 (HNHPSGDPTPSQAD).

Belongs to the UPF0758 family.

This chain is UPF0758 protein, found in Rhodobacter capsulatus (Rhodopseudomonas capsulata).